The chain runs to 181 residues: ADP-ribosylation factor 1 (181 aa).

A lipid anchor (N-myristoyl glycine) is attached at glycine 2. GTP-binding positions include 24–31, 67–71, and 126–129; these read GLDAAGKT, DVGGQ, and NKQD.

The protein belongs to the small GTPase superfamily. Arf family.

The protein resides in the golgi apparatus. The catalysed reaction is GTP + H2O = GDP + phosphate + H(+). GTP-binding protein involved in protein trafficking; may modulate vesicle budding and uncoating within the Golgi apparatus. This is ADP-ribosylation factor 1 (ARF1) from Daucus carota (Wild carrot).